A 273-amino-acid chain; its full sequence is SET domain-containing protein 9 (273 aa).

Residues 96 to 269 (FSVAQATSSL…QGEELFSNYY (174 aa)) enclose the SET domain. Tyr268 contributes to the S-adenosyl-L-methionine binding site.

The protein belongs to the class V-like SAM-binding methyltransferase superfamily.

In Pongo abelii (Sumatran orangutan), this protein is SET domain-containing protein 9 (SETD9).